The primary structure comprises 308 residues: tRNA dimethylallyltransferase 2 (308 aa).

An ATP-binding site is contributed by 13–20 (GPTASGKT). Position 15 to 20 (15 to 20 (TASGKT)) interacts with substrate. Residues 38–41 (DSRQ) form an interaction with substrate tRNA region.

The protein belongs to the IPP transferase family. As to quaternary structure, monomer. The cofactor is Mg(2+).

The enzyme catalyses adenosine(37) in tRNA + dimethylallyl diphosphate = N(6)-dimethylallyladenosine(37) in tRNA + diphosphate. Catalyzes the transfer of a dimethylallyl group onto the adenine at position 37 in tRNAs that read codons beginning with uridine, leading to the formation of N6-(dimethylallyl)adenosine (i(6)A). This chain is tRNA dimethylallyltransferase 2, found in Bacteroides fragilis (strain YCH46).